Reading from the N-terminus, the 126-residue chain is Protein ApaG (126 aa).

In terms of domain architecture, ApaG spans 2–126; the sequence is ADKLYQMEVQ…MTLVAPRVLH (125 aa).

The sequence is that of Protein ApaG from Chromobacterium violaceum (strain ATCC 12472 / DSM 30191 / JCM 1249 / CCUG 213 / NBRC 12614 / NCIMB 9131 / NCTC 9757 / MK).